The following is a 196-amino-acid chain: Putative HTH-type transcriptional regulator protein PtxE (196 aa).

The HTH lysR-type domain occupies 1–59 (MLNPVWLKSLVAIVQTGSFQSAARALGLAQPTVSQHLQKLEEQVGVTLVQRSRSGCQPT). Residues 19–38 (FQSAARALGLAQPTVSQHLQ) constitute a DNA-binding region (H-T-H motif).

The protein belongs to the LysR transcriptional regulatory family.

This chain is Putative HTH-type transcriptional regulator protein PtxE (ptxE), found in Stutzerimonas stutzeri (Pseudomonas stutzeri).